Reading from the N-terminus, the 119-residue chain is Large ribosomal subunit protein uL18 (119 aa).

The protein belongs to the universal ribosomal protein uL18 family. Part of the 50S ribosomal subunit; part of the 5S rRNA/L5/L18/L25 subcomplex. Contacts the 5S and 23S rRNAs.

Functionally, this is one of the proteins that bind and probably mediate the attachment of the 5S RNA into the large ribosomal subunit, where it forms part of the central protuberance. In Paracoccus denitrificans (strain Pd 1222), this protein is Large ribosomal subunit protein uL18.